We begin with the raw amino-acid sequence, 469 residues long: ATP synthase subunit beta (469 aa).

157–164 provides a ligand contact to ATP; that stretch reads GGAGVGKT.

This sequence belongs to the ATPase alpha/beta chains family. In terms of assembly, F-type ATPases have 2 components, CF(1) - the catalytic core - and CF(0) - the membrane proton channel. CF(1) has five subunits: alpha(3), beta(3), gamma(1), delta(1), epsilon(1). CF(0) has three main subunits: a(1), b(2) and c(9-12). The alpha and beta chains form an alternating ring which encloses part of the gamma chain. CF(1) is attached to CF(0) by a central stalk formed by the gamma and epsilon chains, while a peripheral stalk is formed by the delta and b chains.

It localises to the cell membrane. It catalyses the reaction ATP + H2O + 4 H(+)(in) = ADP + phosphate + 5 H(+)(out). Its function is as follows. Produces ATP from ADP in the presence of a proton gradient across the membrane. The catalytic sites are hosted primarily by the beta subunits. This chain is ATP synthase subunit beta, found in Brevibacillus brevis (strain 47 / JCM 6285 / NBRC 100599).